Here is a 177-residue protein sequence, read N- to C-terminus: Calcineurin subunit B (177 aa).

4 EF-hand domains span residues 25-60 (KEIK…AVNP), 62-92 (VKRV…FNAQ), 94-129 (DKQR…MVGN), and 135-170 (QLQQ…QDLE). Positions 38, 40, 42, 44, 49, 70, 72, 74, 76, 81, 107, 109, 111, 113, 118, 148, 150, 152, 154, and 159 each coordinate Ca(2+).

Belongs to the calcineurin regulatory subunit family. As to quaternary structure, composed of a catalytic subunit (A) and a regulatory subunit (B).

In terms of biological role, regulatory subunit of calcineurin, a calcium-dependent, calmodulin stimulated protein phosphatase. Confers calcium sensitivity. This is Calcineurin subunit B (CNB1) from Naegleria gruberi (Amoeba).